A 508-amino-acid polypeptide reads, in one-letter code: Catalase (508 aa).

Catalysis depends on residues H63 and N136. Position 346 (Y346) interacts with heme.

The protein belongs to the catalase family. In terms of assembly, homohexamer. Heme is required as a cofactor.

Its subcellular location is the cytoplasm. It catalyses the reaction 2 H2O2 = O2 + 2 H2O. Functionally, decomposes hydrogen peroxide into water and oxygen; serves to protect cells from the toxic effects of hydrogen peroxide. In Haemophilus influenzae (strain ATCC 51907 / DSM 11121 / KW20 / Rd), this protein is Catalase (katA).